The primary structure comprises 310 residues: tRNA uridine(34) hydroxylase (310 aa).

Positions 124-218 (SDPEVLLIDT…YFEEVPQEES (95 aa)) constitute a Rhodanese domain. The Cysteine persulfide intermediate role is filled by C178.

Belongs to the TrhO family.

It carries out the reaction uridine(34) in tRNA + AH2 + O2 = 5-hydroxyuridine(34) in tRNA + A + H2O. Catalyzes oxygen-dependent 5-hydroxyuridine (ho5U) modification at position 34 in tRNAs. This is tRNA uridine(34) hydroxylase from Pseudomonas putida (strain W619).